Reading from the N-terminus, the 396-residue chain is Putative nickel insertion protein (396 aa).

This sequence belongs to the LarC family.

The polypeptide is Putative nickel insertion protein (Methanosarcina barkeri (strain Fusaro / DSM 804)).